A 489-amino-acid polypeptide reads, in one-letter code: MALFIFLGIWLSCFLFLFLWNQHRGRGKLPPGPTPLPIVGNILQVDVKNISKSMGMLAKKYGPVFTVYLGMKPTVVLHGYKAMKEALIDQGDEFSDKTDSSLLSRTSQGLGIVFSNGETWKQTRRFSLMVLRSMGMGKKTIEDRIQEEILYMLDALRKTNGSPCDPSFLLACVPCNVISTVIFQHRFDYNDQTFQDFMENFHRKIEILASPWSQLCSAYPILYYLPGIHNRFLKDVTQQKKFILEEINRHQKSLDLSNPQDFIDYFLIKMEKEKHNQKSEFTMDNLVVSIGDLFGAGTETTSSTVKYGLLLLLKYPEVTAKIQEEIAHVIGRHRRPTMQDRNHMPYTDAVLHEIQRYIDFVPIPSPRKTTQDVEFRGYHIPKGTSVMACLTSVLNDDKEFPNPEKFDPGHFLDEKGNFKKSDYFVAFSAGRRACIGEGLARMEMFLILTNILQHFTLKPLVKPEDIDTKPVQTGLLHVPPPFELCFIPV.

Positions 1 to 27 (MALFIFLGIWLSCFLFLFLWNQHRGRG) are cleaved as a signal peptide. Residue Cys434 participates in heme binding.

The protein belongs to the cytochrome P450 family. Heme is required as a cofactor. Expressed in liver.

It localises to the endoplasmic reticulum membrane. Its subcellular location is the microsome membrane. It catalyses the reaction chenodeoxycholate + reduced [NADPH--hemoprotein reductase] + O2 = alpha-muricholate + oxidized [NADPH--hemoprotein reductase] + H2O + H(+). The catalysed reaction is ursodeoxycholate + reduced [NADPH--hemoprotein reductase] + O2 = beta-muricholate + oxidized [NADPH--hemoprotein reductase] + H2O + H(+). Its function is as follows. A cytochrome P450 monooxygenase involved in muricholic acid (MCA) synthesis. Hydroxylates at the 6-beta position two major bile acids, chenodeoxycholic acid (CDCA) and ursodeoxycholic acid (UDCA) to form alpha-MCA and beta-MCA, respectively. May regulate NR1H4/farnesoid X receptor signaling, as taurine-conjugated MCAs are antagonists of NR1H4. Mechanistically, uses molecular oxygen inserting one oxygen atom into a substrate, and reducing the second into a water molecule, with two electrons provided by NADPH via cytochrome P450 reductase (CPR; NADPH-ferrihemoprotein reductase). This chain is Cytochrome P450 2C70, found in Mus musculus (Mouse).